The chain runs to 805 residues: MSGSFWLLLSFAALTAAQSTTEELAKTFLETFNYEAQELSYQSSVASWNYNTNITDENAKNMNEAGAKWSAYYEEQSKLAQTYPLAEIQDAKIKRQLQALQQSGSSVLSADKSQRLNTILNAMSTIYSTGKACNPNNPQECLLLEPGLDNIMENSKDYNERLWAWEGWRAEVGKQLRPLYEEYVALKNEMARANNYEDYGDYWRGDYEEEWTGGYNYSRNQLIQDVEDTFEQIKPLYQHLHAYVRAKLMDTYPSRISRTGCLPAHLLGDMWGRFWTNLYPLTVPFGQKPNIDVTDAMVNQNWDARRIFKEAEKFFVSVGLPNMTQGFWENSMLTEPGDGRKVVCHPTAWDLGKGDFRIKMCTKVTMDDFLTAHHEMGHIQYDMAYAAQPFLLRNGANEGFHEAVGEIMSLSAATPNHLKTIGLLSPAFSEDNETEINFLLKQALTIVGTLPFTYMLEKWRWMVFKGAIPKEQWMQKWWEMKRNIVGVVEPVPHDETYCDPASLFHVANDYSFIRYYTRTIYQFQFQEALCQIAKHEGPLHKCDISNSTEAGKKLLEMLSLGRSEPWTLALERVVGAKNMNVTPLLNYFEPLFTWLKEQNRNSFVGWDTDWRPYSDQSIKVRISLKSALGEKAYEWNDNEMYLFRSSIAYAMREYFSKVKNQTIPFVEDNVWVSDLKPRISFNFFVTFSNNVSDVIPRSEVEDAIRMSRSRINDAFRLDDNSLEFLGIEPTLSPPYRPPVTIWLIVFGVVMGAIVVGIVLLIVSGIRNRRKNDQAGSEENPYASVDLNKGENNPGFQHADDVQTSF.

The signal sequence occupies residues 1–17 (MSGSFWLLLSFAALTAA). Topologically, residues 18–740 (QSTTEELAKT…LSPPYRPPVT (723 aa)) are extracellular. The Peptidase M2 domain maps to 19–607 (STTEELAKTF…QNRNSFVGWD (589 aa)). The tract at residues 30-41 (ETFNYEAQELSY) is interaction with SARS S protein. The N-linked (GlcNAc...) asparagine glycan is linked to N53. Interaction with SARS S protein stretches follow at residues 82–84 (TYP) and 90–93 (DAKI). A disulfide bond links C133 and C141. R169 provides a ligand contact to chloride. The N-linked (GlcNAc...) asparagine glycan is linked to N216. R273 contacts substrate. N-linked (GlcNAc...) asparagine glycosylation occurs at N322. C344 and C361 form a disulfide bridge. Position 345–346 (345–346 (HP)) interacts with substrate. The interval 353–357 (KGDFR) is interaction with SARS S protein. H374 is a binding site for Zn(2+). Residue E375 is the Proton acceptor of the active site. 2 residues coordinate Zn(2+): H378 and E402. The chloride site is built by W477 and K481. H505 (proton donor) is an active-site residue. Position 515 (Y515) interacts with substrate. An intrachain disulfide couples C530 to C542. The N-linked (GlcNAc...) asparagine glycan is linked to N546. In terms of domain architecture, Collectrin-like spans 614-805 (SDQSIKVRIS…QHADDVQTSF (192 aa)). The interval 652 to 659 (REYFSKVK) is essential for cleavage by ADAM17. N660 and N690 each carry an N-linked (GlcNAc...) asparagine glycan. Residues 697–716 (RSEVEDAIRMSRSRINDAFR) form an essential for cleavage by TMPRSS11D and TMPRSS2 region. Residues 741-761 (IWLIVFGVVMGAIVVGIVLLI) form a helical membrane-spanning segment. Topologically, residues 762-805 (VSGIRNRRKNDQAGSEENPYASVDLNKGENNPGFQHADDVQTSF) are cytoplasmic. The disordered stretch occupies residues 771–805 (NDQAGSEENPYASVDLNKGENNPGFQHADDVQTSF). The LIR signature appears at 778–786 (ENPYASVDL). A Phosphotyrosine modification is found at Y781. An Endocytic sorting signal motif is present at residues 781 to 784 (YASV). Positions 781–785 (YASVD) match the SH2-binding motif. Phosphoserine is present on S783. The short motif at 792–795 (NPGF) is the PTB element. Residues 803–805 (TSF) carry the PDZ-binding motif.

Belongs to the peptidase M2 family. Homodimer. Interacts with the catalytically active form of TMPRSS2. Interacts with SLC6A19; this interaction is essential for expression and function of SLC6A19 in intestine. Interacts with ITGA5:ITGB1. Probably interacts (via endocytic sorting signal motif) with AP2M1; the interaction is inhibited by phosphorylation of Tyr-781. Interacts (via PDZ-binding motif) with NHERF1 (via PDZ domains); the interaction may enhance ACE2 membrane residence. As to quaternary structure, (Microbial infection) Interacts with SARS-CoV S protein. Zn(2+) is required as a cofactor. The cofactor is chloride. In terms of processing, proteolytic cleavage by ADAM17 generates a secreted form. Also cleaved by serine proteases: TMPRSS2, TMPRSS11D and HPN/TMPRSS1. Phosphorylated. Phosphorylation at Tyr-781 probably inhibits interaction with AP2M1 and enables interactions with proteins containing SH2 domains.

It localises to the secreted. Its subcellular location is the cell membrane. The protein localises to the cytoplasm. It is found in the cell projection. The protein resides in the cilium. It localises to the apical cell membrane. The catalysed reaction is angiotensin II + H2O = angiotensin-(1-7) + L-phenylalanine. It carries out the reaction angiotensin I + H2O = angiotensin-(1-9) + L-leucine. In terms of biological role, essential counter-regulatory carboxypeptidase of the renin-angiotensin hormone system that is a critical regulator of blood volume, systemic vascular resistance, and thus cardiovascular homeostasis. Converts angiotensin I to angiotensin 1-9, a nine-amino acid peptide with anti-hypertrophic effects in cardiomyocytes, and angiotensin II to angiotensin 1-7, which then acts as a beneficial vasodilator and anti-proliferation agent, counterbalancing the actions of the vasoconstrictor angiotensin II. Also removes the C-terminal residue from three other vasoactive peptides, neurotensin, kinetensin, and des-Arg bradykinin, but is not active on bradykinin. Also cleaves other biological peptides, such as apelins, casomorphins and dynorphin A. Plays an important role in amino acid transport by acting as binding partner of amino acid transporter SLC6A19 in intestine, regulating trafficking, expression on the cell surface, and its catalytic activity. Functionally, (Microbial infection) Acts as a receptor for human coronavirus SARS. The sequence is that of Angiotensin-converting enzyme 2 (ACE2) from Paguma larvata (Masked palm civet).